Consider the following 140-residue polypeptide: Methylglyoxal synthase (140 aa).

The region spanning 1–140 (MNIALIAHDE…KERQEKEGTP (140 aa)) is the MGS-like domain. Residues His8, Lys12, 34 to 37 (TGTT), and 54 to 55 (SG) contribute to the substrate site. Asp60 acts as the Proton donor/acceptor in catalysis. His87 contacts substrate.

Belongs to the methylglyoxal synthase family.

It catalyses the reaction dihydroxyacetone phosphate = methylglyoxal + phosphate. In terms of biological role, catalyzes the formation of methylglyoxal from dihydroxyacetone phosphate. The sequence is that of Methylglyoxal synthase from Oceanobacillus iheyensis (strain DSM 14371 / CIP 107618 / JCM 11309 / KCTC 3954 / HTE831).